A 471-amino-acid chain; its full sequence is ATP synthase subunit beta (471 aa).

152–159 (GGAGVGKT) contributes to the ATP binding site.

This sequence belongs to the ATPase alpha/beta chains family. As to quaternary structure, F-type ATPases have 2 components, CF(1) - the catalytic core - and CF(0) - the membrane proton channel. CF(1) has five subunits: alpha(3), beta(3), gamma(1), delta(1), epsilon(1). CF(0) has three main subunits: a(1), b(2) and c(9-12). The alpha and beta chains form an alternating ring which encloses part of the gamma chain. CF(1) is attached to CF(0) by a central stalk formed by the gamma and epsilon chains, while a peripheral stalk is formed by the delta and b chains.

The protein resides in the cell membrane. It carries out the reaction ATP + H2O + 4 H(+)(in) = ADP + phosphate + 5 H(+)(out). Its function is as follows. Produces ATP from ADP in the presence of a proton gradient across the membrane. The catalytic sites are hosted primarily by the beta subunits. The protein is ATP synthase subunit beta of Herpetosiphon aurantiacus (strain ATCC 23779 / DSM 785 / 114-95).